The primary structure comprises 411 residues: Heparan-sulfate 6-O-sulfotransferase 1 (411 aa).

Over 11-17 the chain is Cytoplasmic; sequence MVERASK. A helical; Signal-anchor for type II membrane protein membrane pass occupies residues 18-37; that stretch reads FVLVVAGSVCFMLILYQYAG. Topologically, residues 38 to 411 are lumenal; the sequence is PGLSLGAPGG…DYMSHIIEKW (374 aa). 3'-phosphoadenylyl sulfate is bound at residue 93–101; the sequence is HIQKTGGTT. Substrate-binding positions include 123–124, arginine 140, tryptophan 145, and histidine 150; that span reads KK. Histidine 150 serves as the catalytic Proton acceptor. 2 residues coordinate 3'-phosphoadenylyl sulfate: arginine 185 and serine 193. The substrate site is built by histidine 197 and tryptophan 204. Asparagine 264 carries N-linked (GlcNAc...) asparagine glycosylation. 3'-phosphoadenylyl sulfate is bound at residue 317–319; that stretch reads MQY. A glycan (N-linked (GlcNAc...) asparagine) is linked at asparagine 320. 3'-phosphoadenylyl sulfate is bound at residue 323–324; that stretch reads RA. Residues 352–387 are a coiled coil; that stretch reads KDLFQQRYQYKRQLERREQRLRSREERLLHRAKEAL.

It belongs to the sulfotransferase 6 family. N-glycosylated. Expressed in fetal brain.

The protein localises to the membrane. The enzyme catalyses alpha-D-glucosaminyl-[heparan sulfate](n) + 3'-phosphoadenylyl sulfate = 6-sulfo-alpha-D-glucosaminyl-[heparan sulfate](n) + adenosine 3',5'-bisphosphate + H(+). Functionally, 6-O-sulfation enzyme which catalyzes the transfer of sulfate from 3'-phosphoadenosine 5'-phosphosulfate (PAPS) to position 6 of the N-sulfoglucosamine residue (GlcNS) of heparan sulfate. Critical for normal neuronal development where it may play a role in neuron branching. May also play a role in limb development. May prefer iduronic acid. This Homo sapiens (Human) protein is Heparan-sulfate 6-O-sulfotransferase 1.